A 445-amino-acid polypeptide reads, in one-letter code: Selenocysteine lyase (445 aa).

Position 1 is an N-acetylmethionine (Met1). The disordered stretch occupies residues 1 to 28; sequence MEAAVAPGRDAPAPAASQPSGCGKHNSP. Residue Ser129 is modified to Phosphoserine. An N6-(pyridoxal phosphate)lysine modification is found at Lys259. Cys388 functions as the S-selanylcysteine intermediate in the catalytic mechanism.

This sequence belongs to the class-V pyridoxal-phosphate-dependent aminotransferase family. Homodimer. Pyridoxal 5'-phosphate is required as a cofactor.

It is found in the cytoplasm. It localises to the cytosol. The enzyme catalyses L-selenocysteine + AH2 = hydrogenselenide + L-alanine + A + H(+). Its function is as follows. Catalyzes the decomposition of L-selenocysteine to L-alanine and elemental selenium. This is Selenocysteine lyase (SCLY) from Homo sapiens (Human).